A 488-amino-acid polypeptide reads, in one-letter code: Glutamate--tRNA ligase (488 aa).

Residues 11-21 carry the 'HIGH' region motif; that stretch reads PSPTGQIHIGN. Positions 108, 110, 135, and 137 each coordinate Zn(2+). A 'KMSKS' region motif is present at residues 252-256; it reads KLSKR. Lys255 serves as a coordination point for ATP.

Belongs to the class-I aminoacyl-tRNA synthetase family. Glutamate--tRNA ligase type 1 subfamily. As to quaternary structure, monomer. The cofactor is Zn(2+).

It is found in the cytoplasm. The catalysed reaction is tRNA(Glu) + L-glutamate + ATP = L-glutamyl-tRNA(Glu) + AMP + diphosphate. Catalyzes the attachment of glutamate to tRNA(Glu) in a two-step reaction: glutamate is first activated by ATP to form Glu-AMP and then transferred to the acceptor end of tRNA(Glu). This Natranaerobius thermophilus (strain ATCC BAA-1301 / DSM 18059 / JW/NM-WN-LF) protein is Glutamate--tRNA ligase.